A 185-amino-acid chain; its full sequence is Lipid A acyltransferase PagP (185 aa).

A signal peptide spans 1-14 (MKLKPVLYLLMLLG). C15 is lipidated: N-palmitoyl cysteine. Residue C15 is the site of S-diacylglycerol cysteine attachment. Catalysis depends on residues H57, D100, and S101.

It belongs to the lipid A palmitoyltransferase family. Homodimer.

The protein resides in the cell outer membrane. It catalyses the reaction a lipid A + a 1,2-diacyl-sn-glycero-3-phosphocholine = a hepta-acyl lipid A + a 2-acyl-sn-glycero-3-phosphocholine. The catalysed reaction is a lipid IVA + a 1,2-diacyl-sn-glycero-3-phosphocholine = a lipid IVB + a 2-acyl-sn-glycero-3-phosphocholine. The enzyme catalyses a lipid IIA + a 1,2-diacyl-sn-glycero-3-phosphocholine = a lipid IIB + a 2-acyl-sn-glycero-3-phosphocholine. Functionally, transfers a fatty acid residue from the sn-1 position of a phospholipid to the N-linked hydroxyfatty acid chain on the proximal unit of lipid A or its precursors. This is Lipid A acyltransferase PagP from Erwinia sp. (strain Ejp617).